A 537-amino-acid polypeptide reads, in one-letter code: Chaperonin GroEL (537 aa).

ATP-binding positions include 29-32, 86-90, glycine 413, and aspartate 492; these read TLGP and DGTTT.

This sequence belongs to the chaperonin (HSP60) family. In terms of assembly, forms a cylinder of 14 subunits composed of two heptameric rings stacked back-to-back. Interacts with the co-chaperonin GroES.

It localises to the cytoplasm. It catalyses the reaction ATP + H2O + a folded polypeptide = ADP + phosphate + an unfolded polypeptide.. Functionally, together with its co-chaperonin GroES, plays an essential role in assisting protein folding. The GroEL-GroES system forms a nano-cage that allows encapsulation of the non-native substrate proteins and provides a physical environment optimized to promote and accelerate protein folding. This is Chaperonin GroEL from Dehalococcoides mccartyi (strain ATCC BAA-2266 / KCTC 15142 / 195) (Dehalococcoides ethenogenes (strain 195)).